We begin with the raw amino-acid sequence, 645 residues long: Glucans biosynthesis glucosyltransferase H (645 aa).

A compositionally biased stretch (polar residues) spans methionine 1–threonine 12. A disordered region spans residues methionine 1–alanine 22. 7 consecutive transmembrane segments (helical) span residues leucine 64–tryptophan 84, leucine 98–valine 118, alanine 423–isoleucine 443, alanine 465–isoleucine 485, alanine 504–leucine 524, tyrosine 559–alanine 579, and leucine 580–leucine 600.

This sequence belongs to the glycosyltransferase 2 family. OpgH subfamily.

The protein resides in the cell inner membrane. The protein operates within glycan metabolism; osmoregulated periplasmic glucan (OPG) biosynthesis. Its function is as follows. Involved in the biosynthesis of osmoregulated periplasmic glucans (OPGs). The sequence is that of Glucans biosynthesis glucosyltransferase H from Xanthomonas oryzae pv. oryzae (strain MAFF 311018).